Reading from the N-terminus, the 598-residue chain is Movement protein Hsp70h (598 aa).

It belongs to the heat shock protein 70 family. In terms of assembly, homomultimer. Interacts with p20. This interaction allows the docking of the latter to the virion.

It is found in the virion. Its subcellular location is the host cell junction. The protein localises to the host plasmodesma. Functionally, transports viral genome to neighboring plant cells directly through plasmosdesmata, without any budding. The movement protein allows efficient cell to cell propagation, by bypassing the host cell wall barrier. Two movement proteins, p6, Hsp70h and three structural proteins, CP, CPm, and P64 are essential for cell-cell movement. Also plays a role in virion formation. Together with CPm and p64, encapsidates the 5'-terminal portion of the viral genome. This is Movement protein Hsp70h from Beta vulgaris (Sugar beet).